Here is a 171-residue protein sequence, read N- to C-terminus: ATP synthase subunit b (171 aa).

A helical membrane pass occupies residues 2–22 (VLVKMALGFLILLSPLCAMEL).

Belongs to the ATPase B chain family. F-type ATPases have 2 components, F(1) - the catalytic core - and F(0) - the membrane proton channel. F(1) has five subunits: alpha(3), beta(3), gamma(1), delta(1), epsilon(1). F(0) has three main subunits: a(1), b(2) and c(10-14). The alpha and beta chains form an alternating ring which encloses part of the gamma chain. F(1) is attached to F(0) by a central stalk formed by the gamma and epsilon chains, while a peripheral stalk is formed by the delta and b chains.

The protein localises to the cell inner membrane. Functionally, f(1)F(0) ATP synthase produces ATP from ADP in the presence of a proton or sodium gradient. F-type ATPases consist of two structural domains, F(1) containing the extramembraneous catalytic core and F(0) containing the membrane proton channel, linked together by a central stalk and a peripheral stalk. During catalysis, ATP synthesis in the catalytic domain of F(1) is coupled via a rotary mechanism of the central stalk subunits to proton translocation. In terms of biological role, component of the F(0) channel, it forms part of the peripheral stalk, linking F(1) to F(0). The chain is ATP synthase subunit b from Helicobacter acinonychis (strain Sheeba).